Reading from the N-terminus, the 1074-residue chain is Carbamoyl phosphate synthase large chain (1074 aa).

A carboxyphosphate synthetic domain region spans residues 1–399 (MPKRSDIKKV…ALMKAIRSLD (399 aa)). ATP is bound by residues R129, R169, G175, G176, E208, V210, E215, G241, I242, H243, Q284, and E296. An ATP-grasp 1 domain is found at 133-325 (KKAMERIGEP…IARVTAKIAI (193 aa)). Mg(2+) is bound by residues Q284, E296, and N298. Mn(2+) is bound by residues Q284, E296, and N298. The tract at residues 400–543 (IDIDLGYNGK…YSTYDEECEL (144 aa)) is oligomerization domain. Positions 544 to 933 (NPSDNKKVLI…FKAEMSAENN (390 aa)) are carbamoyl phosphate synthetic domain. In terms of domain architecture, ATP-grasp 2 spans 674-865 (NKLLNKLGIP…LAKIAAKVMA (192 aa)). Residues R710, D749, L751, E756, G781, I782, H783, S784, Q824, and E836 each coordinate ATP. Positions 824, 836, and 838 each coordinate Mg(2+). Residues Q824, E836, and N838 each contribute to the Mn(2+) site. Residues 932 to 1074 (NNLPLDGIVF…YHREVRYRAL (143 aa)) enclose the MGS-like domain. The segment at 934–1074 (LPLDGIVFIS…YHREVRYRAL (141 aa)) is allosteric domain.

This sequence belongs to the CarB family. In terms of assembly, composed of two chains; the small (or glutamine) chain promotes the hydrolysis of glutamine to ammonia, which is used by the large (or ammonia) chain to synthesize carbamoyl phosphate. Tetramer of heterodimers (alpha,beta)4. Mg(2+) serves as cofactor. The cofactor is Mn(2+).

The catalysed reaction is hydrogencarbonate + L-glutamine + 2 ATP + H2O = carbamoyl phosphate + L-glutamate + 2 ADP + phosphate + 2 H(+). It carries out the reaction hydrogencarbonate + NH4(+) + 2 ATP = carbamoyl phosphate + 2 ADP + phosphate + 2 H(+). Its pathway is amino-acid biosynthesis; L-arginine biosynthesis; carbamoyl phosphate from bicarbonate: step 1/1. The protein operates within pyrimidine metabolism; UMP biosynthesis via de novo pathway; (S)-dihydroorotate from bicarbonate: step 1/3. Its function is as follows. Large subunit of the glutamine-dependent carbamoyl phosphate synthetase (CPSase). CPSase catalyzes the formation of carbamoyl phosphate from the ammonia moiety of glutamine, carbonate, and phosphate donated by ATP, constituting the first step of 2 biosynthetic pathways, one leading to arginine and/or urea and the other to pyrimidine nucleotides. The large subunit (synthetase) binds the substrates ammonia (free or transferred from glutamine from the small subunit), hydrogencarbonate and ATP and carries out an ATP-coupled ligase reaction, activating hydrogencarbonate by forming carboxy phosphate which reacts with ammonia to form carbamoyl phosphate. The chain is Carbamoyl phosphate synthase large chain from Methanothrix thermoacetophila (strain DSM 6194 / JCM 14653 / NBRC 101360 / PT) (Methanosaeta thermophila).